The sequence spans 241 residues: Triosephosphate isomerase (241 aa).

Substrate is bound at residue N9–K11. The active-site Electrophile is the H96. Residue E165 is the Proton acceptor of the active site. Substrate-binding positions include G171, S204, and G225 to G226.

Belongs to the triosephosphate isomerase family. As to quaternary structure, homodimer.

Its subcellular location is the cytoplasm. The enzyme catalyses D-glyceraldehyde 3-phosphate = dihydroxyacetone phosphate. Its pathway is carbohydrate biosynthesis; gluconeogenesis. The protein operates within carbohydrate degradation; glycolysis; D-glyceraldehyde 3-phosphate from glycerone phosphate: step 1/1. Involved in the gluconeogenesis. Catalyzes stereospecifically the conversion of dihydroxyacetone phosphate (DHAP) to D-glyceraldehyde-3-phosphate (G3P). This chain is Triosephosphate isomerase, found in Gloeothece citriformis (strain PCC 7424) (Cyanothece sp. (strain PCC 7424)).